The primary structure comprises 593 residues: Kelch-like protein 2 (593 aa).

The tract at residues 1-28 is disordered; it reads METPPLPPACTKQGHQKPLDSKDDNTEK. The span at 17–28 shows a compositional bias: basic and acidic residues; sequence KPLDSKDDNTEK. The BTB domain maps to 56-123; it reads CDVTIVAEDM…VYTAEIQVTE (68 aa). 6 Kelch repeats span residues 308–353, 354–400, 402–447, 449–496, 497–543, and 545–591; these read LMVV…YMAG, LVFA…VLNG, LYAV…VVGG, LYAV…VLNN, LLYA…AVNG, and LYVV…VIDK.

As to quaternary structure, component of the BCR(KLHL2) E3 ubiquitin ligase complex, at least composed of CUL3 and KLHL2 and RBX1. Binds actin. Interacts with KLHL12. Interacts (via N-terminus) with FYN (via SH3 domain). Ubiquitous. Detected throughout the brain.

It localises to the cytoplasm. The protein localises to the cytoskeleton. It is found in the cell projection. The protein resides in the ruffle. Its subcellular location is the lamellipodium. It localises to the cytosol. Its pathway is protein modification; protein ubiquitination. Functionally, substrate-specific adapter of a BCR (BTB-CUL3-RBX1) E3 ubiquitin ligase complex that mediates the ubiquitination of target proteins, such as NPTXR, WNK1, WNK3 and WNK4, leading most often to their proteasomal degradation. The BCR(KLHL2) complex catalyzes ubiquitination and degradation of NPTXR. Responsible for degradative ubiquitination of the WNK kinases WNK1, WNK3 and WNK4. Plays a role in the reorganization of the actin cytoskeleton. Promotes growth of cell projections in oligodendrocyte precursors. The chain is Kelch-like protein 2 from Homo sapiens (Human).